The primary structure comprises 137 residues: Hemoglobin subunit beta (137 aa).

The region spanning 3–137 (HWTQEERDEI…VIDAISKQYH (135 aa)) is the Globin domain. 2 residues coordinate heme b: His-54 and His-83.

Belongs to the globin family. As to quaternary structure, heterotetramer of two alpha chains and two beta chains. As to expression, red blood cells.

Its function is as follows. Involved in oxygen transport from gills to the various peripheral tissues. The protein is Hemoglobin subunit beta (HBB) of Mustelus griseus (Spotless smooth-hound).